The primary structure comprises 1411 residues: DNA-directed RNA polymerase subunit beta' (1411 aa).

Zn(2+) is bound by residues C69, C71, C84, and C87. Residues D461, D463, and D465 each contribute to the Mg(2+) site. C809, C883, C890, and C893 together coordinate Zn(2+).

It belongs to the RNA polymerase beta' chain family. As to quaternary structure, the RNAP catalytic core consists of 2 alpha, 1 beta, 1 beta' and 1 omega subunit. When a sigma factor is associated with the core the holoenzyme is formed, which can initiate transcription. Mg(2+) serves as cofactor. It depends on Zn(2+) as a cofactor.

It catalyses the reaction RNA(n) + a ribonucleoside 5'-triphosphate = RNA(n+1) + diphosphate. Functionally, DNA-dependent RNA polymerase catalyzes the transcription of DNA into RNA using the four ribonucleoside triphosphates as substrates. The protein is DNA-directed RNA polymerase subunit beta' of Ehrlichia ruminantium (strain Welgevonden).